Here is a 183-residue protein sequence, read N- to C-terminus: Ribosome rescue factor SmrB (183 aa).

The 76-residue stretch at Leu98–Glu173 folds into the Smr domain.

This sequence belongs to the SmrB family. As to quaternary structure, associates with collided ribosomes, but not with correctly translating polysomes.

Its function is as follows. Acts as a ribosome collision sensor. Detects stalled/collided disomes (pairs of ribosomes where the leading ribosome is stalled and a second ribosome has collided with it) and endonucleolytically cleaves mRNA at the 5' boundary of the stalled ribosome. Stalled/collided disomes form a new interface (primarily via the 30S subunits) that binds SmrB. Cleaved mRNA becomes available for tmRNA ligation, leading to ribosomal subunit dissociation and rescue of stalled ribosomes. This Salmonella agona (strain SL483) protein is Ribosome rescue factor SmrB.